The following is a 155-amino-acid chain: Ribosomal RNA large subunit methyltransferase H (155 aa).

S-adenosyl-L-methionine-binding positions include Leu-72, Gly-103, and 122 to 127 (LSPLTL).

It belongs to the RNA methyltransferase RlmH family. In terms of assembly, homodimer.

It localises to the cytoplasm. The enzyme catalyses pseudouridine(1915) in 23S rRNA + S-adenosyl-L-methionine = N(3)-methylpseudouridine(1915) in 23S rRNA + S-adenosyl-L-homocysteine + H(+). In terms of biological role, specifically methylates the pseudouridine at position 1915 (m3Psi1915) in 23S rRNA. In Aeromonas salmonicida (strain A449), this protein is Ribosomal RNA large subunit methyltransferase H.